Consider the following 720-residue polypeptide: Calcium/calmodulin-dependent protein kinase type II (720 aa).

The 258-residue stretch at 12-269 folds into the Protein kinase domain; the sequence is YDVKEELGKG…ADQALKVPWI (258 aa). ATP-binding positions include 18–26 and Lys-41; that span reads LGKGAFSVV. Residue Asp-134 is the Proton acceptor of the active site. A Phosphothreonine; by autocatalysis modification is found at Thr-284. Disordered stretches follow at residues 317–345 and 504–586; these read SDST…QPTS and DNLS…NLSA. 2 stretches are compositionally biased toward polar residues: residues 504-514 and 526-540; these read DNLSASTSSDL and PPST…SQTI. Residues 569–586 are compositionally biased toward low complexity; that stretch reads SSSNSSTASKSSSTNLSA.

Belongs to the protein kinase superfamily. CAMK Ser/Thr protein kinase family. CaMK subfamily. Dodecamer. Subunits are tightly packed around a central ring-shaped scaffold with extensive contacts between the regulatory segment of one kinase and the catalytic domain of another enabling cooperative activation of a subunit by the adjacent molecule. Interacts with and phosphorylates daf-16; the interaction promotes daf-16 nuclear localization. Interacts with egl-2 and tir-1. Interacts with nsy-1. It depends on Mg(2+) as a cofactor. In terms of tissue distribution, expressed in the nervous system. Observed in the ADF and AWC neurons. Position in AWC neurons is regulated by microtubules. Localized to clusters in ventral cord neurites which appear to be required for glr-1 trafficking. Also present in oocytes.

The protein resides in the cytoplasm. It localises to the cell projection. The protein localises to the axon. It is found in the perikaryon. The catalysed reaction is L-seryl-[protein] + ATP = O-phospho-L-seryl-[protein] + ADP + H(+). It carries out the reaction L-threonyl-[protein] + ATP = O-phospho-L-threonyl-[protein] + ADP + H(+). With respect to regulation, ca2(+)/calmodulin binding removes an autoinhibitory regulatory segment located C-terminal to the kinase domain. This releases the catalytic activity of the enzyme and makes accessible a regulatory residue Thr-284. Phosphorylation of Thr-284 by another kinase domain within the oligomeric holoenzyme keeps CaMKII active in the absence of Ca(2+)/calmodulin by preventing the rebinding of the regulatory segment to the kinase domain and by increasing the affinity of calmodulin for the enzyme. Can respond to high-frequency Ca(2+) pulses to become Ca(2+) independent. In terms of biological role, acts in the signaling of a variety of pathways and processes. Phosphorylates 'Ser-319' of daf-16 in response to stress signals, such as heat, starvation and oxidation, which plays a role in prolonging lifespan. Required for viability under chronic osmotic stress in which it acts downstream of osr-1. Has roles in locomotion, oocyte maturation, brood size, egg laying, defecation, meiotic maturation and neuronal cell fate specification. Required for the regulation of synaptic density and neuromuscular junction morphology. Regulates the synaptic trafficking of glr-1. Bidirectional modulator of neurotransmitter release with negative modulatory effects mainly mediated via slo-1 activation. Involved in activation of ADF neurons and increased tph-1 transcription following exposure to pathogenic bacteria which leads to learned olfactory aversion to the bacteria. Implicated in the muscle regulation of spicule protraction. In conjunction with egl-2 has a role in the suppression of mating behavior under food deprivation to encourage foraging. Involved in restricting str-2 expression to only one of the two AWC neurons. May suppress the functional response to an internal pacemaker, perhaps by modulating the activity of the IP3 receptor. The sequence is that of Calcium/calmodulin-dependent protein kinase type II (unc-43) from Caenorhabditis elegans.